Consider the following 97-residue polypeptide: Co-chaperonin GroES (97 aa).

It belongs to the GroES chaperonin family. Heptamer of 7 subunits arranged in a ring. Interacts with the chaperonin GroEL.

Its subcellular location is the cytoplasm. Together with the chaperonin GroEL, plays an essential role in assisting protein folding. The GroEL-GroES system forms a nano-cage that allows encapsulation of the non-native substrate proteins and provides a physical environment optimized to promote and accelerate protein folding. GroES binds to the apical surface of the GroEL ring, thereby capping the opening of the GroEL channel. This Edwardsiella ictaluri (strain 93-146) protein is Co-chaperonin GroES.